The following is a 124-amino-acid chain: FK506-binding protein 1 (124 aa).

The region spanning 23-122 (GDTVTIHYDG…VFEVELLGVN (100 aa)) is the PPIase FKBP-type domain.

It belongs to the FKBP-type PPIase family. FKBP1 subfamily.

It localises to the cytoplasm. It catalyses the reaction [protein]-peptidylproline (omega=180) = [protein]-peptidylproline (omega=0). Its activity is regulated as follows. Inhibited by rapamycin. PPIases accelerate the folding of proteins. It catalyzes the cis-trans isomerization of proline imidic peptide bonds in oligopeptides. The sequence is that of FK506-binding protein 1 (RBP1) from Candida albicans (strain SC5314 / ATCC MYA-2876) (Yeast).